Reading from the N-terminus, the 132-residue chain is Large ribosomal subunit protein bL19 (132 aa).

It belongs to the bacterial ribosomal protein bL19 family.

Functionally, this protein is located at the 30S-50S ribosomal subunit interface and may play a role in the structure and function of the aminoacyl-tRNA binding site. This Maricaulis maris (strain MCS10) (Caulobacter maris) protein is Large ribosomal subunit protein bL19.